We begin with the raw amino-acid sequence, 168 residues long: Small ribosomal subunit protein uS9 (168 aa).

The span at 1–15 (MAQNEETTEAVEAEE) shows a compositional bias: acidic residues. Residues 1 to 34 (MAQNEETTEAVEAEETLTSYTSESGAAEAAAPKK) are disordered.

This sequence belongs to the universal ribosomal protein uS9 family.

This chain is Small ribosomal subunit protein uS9, found in Arthrobacter sp. (strain FB24).